We begin with the raw amino-acid sequence, 244 residues long: 1-(5-phosphoribosyl)-5-[(5-phosphoribosylamino)methylideneamino] imidazole-4-carboxamide isomerase (244 aa).

D8 serves as the catalytic Proton acceptor. The Proton donor role is filled by D129.

The protein belongs to the HisA/HisF family.

It localises to the cytoplasm. It carries out the reaction 1-(5-phospho-beta-D-ribosyl)-5-[(5-phospho-beta-D-ribosylamino)methylideneamino]imidazole-4-carboxamide = 5-[(5-phospho-1-deoxy-D-ribulos-1-ylimino)methylamino]-1-(5-phospho-beta-D-ribosyl)imidazole-4-carboxamide. The protein operates within amino-acid biosynthesis; L-histidine biosynthesis; L-histidine from 5-phospho-alpha-D-ribose 1-diphosphate: step 4/9. In Bradyrhizobium sp. (strain ORS 278), this protein is 1-(5-phosphoribosyl)-5-[(5-phosphoribosylamino)methylideneamino] imidazole-4-carboxamide isomerase.